The chain runs to 243 residues: Carboxy-S-adenosyl-L-methionine synthase (243 aa).

S-adenosyl-L-methionine is bound by residues Tyr40, 65-67 (GCS), 90-91 (DN), 118-119 (DI), Asn133, and Arg200.

The protein belongs to the class I-like SAM-binding methyltransferase superfamily. Cx-SAM synthase family. Homodimer.

It catalyses the reaction prephenate + S-adenosyl-L-methionine = carboxy-S-adenosyl-L-methionine + 3-phenylpyruvate + H2O. Functionally, catalyzes the conversion of S-adenosyl-L-methionine (SAM) to carboxy-S-adenosyl-L-methionine (Cx-SAM). This Shewanella woodyi (strain ATCC 51908 / MS32) protein is Carboxy-S-adenosyl-L-methionine synthase.